The primary structure comprises 258 residues: Small ribosomal subunit protein uS2 (258 aa).

Belongs to the universal ribosomal protein uS2 family.

The polypeptide is Small ribosomal subunit protein uS2 (Leuconostoc citreum (strain KM20)).